A 453-amino-acid polypeptide reads, in one-letter code: Nuclear and cytoplasmic polyadenylated RNA-binding protein PUB1 (453 aa).

The disordered stretch occupies residues Met-1 to Thr-67. N-acetylserine is present on Ser-2. RRM domains follow at residues Arg-75–Gln-152 and Phe-162–Lys-240. The disordered stretch occupies residues Arg-241–Gly-262. The span at Asn-244–Gly-262 shows a compositional bias: low complexity. Arg-260 bears the Omega-N-methylarginine mark. The interval Arg-260 to Arg-264 is RNA-binding RGG-box. The RRM 3 domain occupies Thr-341–Glu-413. Residues Pro-419–Gln-453 form a disordered region. Over residues Gln-434 to Gln-453 the composition is skewed to low complexity.

As to quaternary structure, interacts with NAB2.

Its subcellular location is the cytoplasm. It is found in the nucleus. The protein resides in the P-body. The protein localises to the stress granule. In terms of biological role, may be associated with hnRNA within the nucleus and remains associated during nucleocytoplasmic mRNA transport, once the proteins are in the cytoplasm, disassembly of PUB1-RNA complexes may occur prior to PAB1 binding and formation of a translationally competent RNP complex. Binds to polyadenylated RNA; prefers to bind poly(rU); binds to T-rich single-stranded DNA. The protein is Nuclear and cytoplasmic polyadenylated RNA-binding protein PUB1 of Saccharomyces cerevisiae (strain ATCC 204508 / S288c) (Baker's yeast).